The sequence spans 353 residues: Photosystem II protein D1 (353 aa).

Threonine 2 is subject to N-acetylthreonine. A Phosphothreonine modification is found at threonine 2. Transmembrane regions (helical) follow at residues 29–46, 118–133, and 142–156; these read YIGW…TATS, HFLL…EWEL, and WIAV…AATA. Chlorophyll a is bound at residue histidine 118. Tyrosine 126 contacts pheophytin a. The [CaMn4O5] cluster site is built by aspartate 170 and glutamate 189. The helical transmembrane segment at 197–218 threads the bilayer; the sequence is FHMLGVAGVFGSSLFSAMHGSL. Chlorophyll a is bound at residue histidine 198. A quinone-binding positions include histidine 215 and 264 to 265; that span reads SF. A Fe cation-binding site is contributed by histidine 215. Residue histidine 272 participates in Fe cation binding. The chain crosses the membrane as a helical span at residues 274 to 288; the sequence is FLAAWPVVGIWFTAL. The [CaMn4O5] cluster site is built by histidine 332, glutamate 333, aspartate 342, and alanine 344. The propeptide occupies 345–353; that stretch reads AMEAPSVNG.

It belongs to the reaction center PufL/M/PsbA/D family. PSII is composed of 1 copy each of membrane proteins PsbA, PsbB, PsbC, PsbD, PsbE, PsbF, PsbH, PsbI, PsbJ, PsbK, PsbL, PsbM, PsbT, PsbX, PsbY, PsbZ, Psb30/Ycf12, at least 3 peripheral proteins of the oxygen-evolving complex and a large number of cofactors. It forms dimeric complexes. The D1/D2 heterodimer binds P680, chlorophylls that are the primary electron donor of PSII, and subsequent electron acceptors. It shares a non-heme iron and each subunit binds pheophytin, quinone, additional chlorophylls, carotenoids and lipids. D1 provides most of the ligands for the Mn4-Ca-O5 cluster of the oxygen-evolving complex (OEC). There is also a Cl(-1) ion associated with D1 and D2, which is required for oxygen evolution. The PSII complex binds additional chlorophylls, carotenoids and specific lipids. is required as a cofactor. In terms of processing, tyr-161 forms a radical intermediate that is referred to as redox-active TyrZ, YZ or Y-Z. C-terminally processed by CTPA; processing is essential to allow assembly of the oxygen-evolving complex and thus photosynthetic growth.

It is found in the plastid. It localises to the chloroplast thylakoid membrane. It carries out the reaction 2 a plastoquinone + 4 hnu + 2 H2O = 2 a plastoquinol + O2. Photosystem II (PSII) is a light-driven water:plastoquinone oxidoreductase that uses light energy to abstract electrons from H(2)O, generating O(2) and a proton gradient subsequently used for ATP formation. It consists of a core antenna complex that captures photons, and an electron transfer chain that converts photonic excitation into a charge separation. The D1/D2 (PsbA/PsbD) reaction center heterodimer binds P680, the primary electron donor of PSII as well as several subsequent electron acceptors. This is Photosystem II protein D1 from Vigna unguiculata (Cowpea).